A 249-amino-acid chain; its full sequence is Early E1A protein (249 aa).

An interaction with RB1 in competition with E2F1 region spans residues 38-46 (MSLHDLFDV). An interaction with UBE2I region spans residues 74–131 (SAAESGSGDSGVGEELLPVDLDLKCYEDGLPPSDPETDEATEAEEEAAMPTYVNENEN). The short motif at 96 to 100 (LKCYE) is the LXCXE motif, interaction with host RB1 and TMEM173/STING element. A zinc finger spans residues 145 to 165 (CRACDFHRGTSGNPEAMCALC). The segment at 180-203 (DAEGESESGSPEDTDFPHPLTATP) is disordered. Positions 181-193 (AEGESESGSPEDT) are enriched in acidic residues. A PXDLS motif, CTBP-binding motif is present at residues 238 to 242 (PLNLS). The Nuclear localization signal signature appears at 244–248 (KRPKC).

It belongs to the adenoviridae E1A protein family. In terms of assembly, interacts with host UBE2I; this interaction interferes with polySUMOylation. Interacts with host RB1; this interaction induces the aberrant dissociation of RB1-E2F1 complex thereby disrupting the activity of RB1 and activating E2F1-regulated genes. Interacts with host ATF7; the interaction enhances ATF7-mediated viral transactivation activity which requires the zinc binding domains of both proteins. Isoform early E1A 32 kDa protein and isoform early E1A 26 kDa protein interact (via N-terminus) with CUL1 and E3 ubiquitin ligase RBX1; these interactions inhibit RBX1-CUL1-dependent elongation reaction of ubiquitin chains and attenuate ubiquitination of SCF(FBXW7) target proteins. Interacts (via PXLXP motif) with host ZMYND11/BS69 (via MYND-type zinc finger); this interaction inhibits E1A mediated transactivation. Interacts with host EP300; this interaction stimulates the acetylation of RB1 by recruiting EP300 and RB1 into a multimeric-protein complex. Interacts with host CTBP1 and CTBP2; this interaction seems to potentiate viral replication. Interacts with host DCAF7. Interacts with host DYRK1A. Interacts with host KPNA4; this interaction allows E1A import into the host nucleus. Interacts with host EP400; this interaction stabilizes MYC. Interacts with host TBP protein; this interaction probably disrupts the TBP-TATA complex. Interacts (via LXCXE motif) with host TMEM173/STING; this interaction impairs the ability of TMEM173/STING to sense cytosolic DNA and promote the production of type I interferon (IFN-alpha and IFN-beta). Interacts (via C-terminus) with host ZBED1/hDREF (via C-terminus); the interaction is direct.

The protein resides in the host nucleus. Functionally, plays a role in viral genome replication by driving entry of quiescent cells into the cell cycle. Stimulation of progression from G1 to S phase allows the virus to efficiently use the cellular DNA replicating machinery to achieve viral genome replication. E1A protein has both transforming and trans-activating activities. Induces the disassembly of the E2F1 transcription factor from RB1 by direct competition for the same binding site on RB1, with subsequent transcriptional activation of E2F1-regulated S-phase genes and of the E2 region of the adenoviral genome. Release of E2F1 leads to the ARF-mediated inhibition of MDM2 and causes TP53/p53 to accumulate because it is not targeted for degradation by MDM2-mediated ubiquitination anymore. This increase in TP53, in turn, would arrest the cell proliferation and direct its death but this effect is counteracted by the viral protein E1B-55K. Inactivation of the ability of RB1 to arrest the cell cycle is critical for cellular transformation, uncontrolled cellular growth and proliferation induced by viral infection. Interaction with RBX1 and CUL1 inhibits ubiquitination of the proteins targeted by SCF(FBXW7) ubiquitin ligase complex, and may be linked to unregulated host cell proliferation. The tumorigenesis-restraining activity of E1A may be related to the disruption of the host CtBP-CtIP complex through the CtBP binding motif. Interaction with host TMEM173/STING impairs the ability of TMEM173/STING to sense cytosolic DNA and promote the production of type I interferon (IFN-alpha and IFN-beta). Promotes the sumoylation of host ZBED1/hDREF with SUMO1. In Homo sapiens (Human), this protein is Early E1A protein.